Consider the following 148-residue polypeptide: Ubiquitin-conjugating enzyme E2 4 (148 aa).

Positions 1-22 are disordered; that stretch reads MSSSKRIAKELSDLERDPPTSC. One can recognise a UBC core domain in the interval 2–148; the sequence is SSSKRIAKEL…AREWTKKYAV (147 aa). Residues 7 to 18 show a composition bias toward basic and acidic residues; it reads IAKELSDLERDP. Ser12 is subject to Phosphoserine. Cys86 serves as the catalytic Glycyl thioester intermediate. Residue Lys91 forms a Glycyl lysine isopeptide (Lys-Gly) (interchain with G-Cter in ubiquitin) linkage.

Belongs to the ubiquitin-conjugating enzyme family. As to quaternary structure, interacts with TUL1. In terms of processing, the N-terminus is blocked.

The enzyme catalyses S-ubiquitinyl-[E1 ubiquitin-activating enzyme]-L-cysteine + [E2 ubiquitin-conjugating enzyme]-L-cysteine = [E1 ubiquitin-activating enzyme]-L-cysteine + S-ubiquitinyl-[E2 ubiquitin-conjugating enzyme]-L-cysteine.. Its pathway is protein modification; protein ubiquitination. In terms of biological role, E2 ubiquitin-conjugating enzyme that catalyzes the covalent attachment of ubiquitin to other proteins. Mediates the selective degradation of short-lived and abnormal proteins. Mediates ubiquitination of PEX5. This chain is Ubiquitin-conjugating enzyme E2 4, found in Saccharomyces cerevisiae (strain ATCC 204508 / S288c) (Baker's yeast).